Reading from the N-terminus, the 182-residue chain is Peptidyl-prolyl cis-trans isomerase H (182 aa).

A PPIase cyclophilin-type domain is found at 15 to 181 (FFDITLGGEP…LDVVIAQCGE (167 aa)).

It belongs to the cyclophilin-type PPIase family. PPIase H subfamily.

The protein resides in the nucleus. The catalysed reaction is [protein]-peptidylproline (omega=180) = [protein]-peptidylproline (omega=0). In terms of biological role, PPIases accelerate the folding of proteins. It catalyzes the cis-trans isomerization of proline imidic peptide bonds in oligopeptides. The chain is Peptidyl-prolyl cis-trans isomerase H (cyp-3) from Neurospora crassa (strain ATCC 24698 / 74-OR23-1A / CBS 708.71 / DSM 1257 / FGSC 987).